Reading from the N-terminus, the 183-residue chain is ATP synthase subunit b, chloroplastic (183 aa).

The chain crosses the membrane as a helical span at residues 25–45 (DILATNLINLTVVVGVLIFFG).

The protein belongs to the ATPase B chain family. F-type ATPases have 2 components, F(1) - the catalytic core - and F(0) - the membrane proton channel. F(1) has five subunits: alpha(3), beta(3), gamma(1), delta(1), epsilon(1). F(0) has four main subunits: a(1), b(1), b'(1) and c(10-14). The alpha and beta chains form an alternating ring which encloses part of the gamma chain. F(1) is attached to F(0) by a central stalk formed by the gamma and epsilon chains, while a peripheral stalk is formed by the delta, b and b' chains.

Its subcellular location is the plastid. It localises to the chloroplast thylakoid membrane. Functionally, f(1)F(0) ATP synthase produces ATP from ADP in the presence of a proton or sodium gradient. F-type ATPases consist of two structural domains, F(1) containing the extramembraneous catalytic core and F(0) containing the membrane proton channel, linked together by a central stalk and a peripheral stalk. During catalysis, ATP synthesis in the catalytic domain of F(1) is coupled via a rotary mechanism of the central stalk subunits to proton translocation. Its function is as follows. Component of the F(0) channel, it forms part of the peripheral stalk, linking F(1) to F(0). The sequence is that of ATP synthase subunit b, chloroplastic from Zea mays (Maize).